The primary structure comprises 53 residues: ComX pheromone (53 aa).

The propeptide occupies 1 to 46; the sequence is MQEMVGYLIKYPNVLREVMEGNACLLGVDKDQSECIINGFKGLEIY. Trp-51 carries the 3'-geranyl-2',N2-cyclotryptophan lipid modification.

As to quaternary structure, interacts directly with the sensor histidine kinase ComP and stimulates its activity. Trp-51 is modified by geranylation, which is essential for activity. Modified by the tryptophan prenyltransferase ComQ before export to the extracellular environment. The type of isoprenyl derivative differs among the different pherotypes and depends on ComX primary sequence.

The protein localises to the secreted. Its function is as follows. Part of a major quorum-sensing system that regulates the development of genetic competence. Acts through the activation of the two-component regulatory system ComP/ComA composed of a sensor histidine kinase, ComP, and a response regulator, ComA. In Bacillus mojavensis, this protein is ComX pheromone.